A 393-amino-acid chain; its full sequence is S-adenosylmethionine synthase (393 aa).

E9 contacts Mg(2+). H15 provides a ligand contact to ATP. E43 contributes to the K(+) binding site. Positions 56 and 99 each coordinate L-methionine. ATP contacts are provided by residues 167–169, 235–238, D246, 252–253, A269, K273, and K277; these read DGK, SGRF, and RK. D246 contacts L-methionine. K277 provides a ligand contact to L-methionine.

Belongs to the AdoMet synthase family. As to quaternary structure, homotetramer. Mn(2+) serves as cofactor. It depends on Mg(2+) as a cofactor. Requires Co(2+) as cofactor. The cofactor is K(+).

The protein localises to the cytoplasm. It carries out the reaction L-methionine + ATP + H2O = S-adenosyl-L-methionine + phosphate + diphosphate. Its pathway is amino-acid biosynthesis; S-adenosyl-L-methionine biosynthesis; S-adenosyl-L-methionine from L-methionine: step 1/1. Functionally, catalyzes the formation of S-adenosylmethionine from methionine and ATP. The reaction comprises two steps that are both catalyzed by the same enzyme: formation of S-adenosylmethionine (AdoMet) and triphosphate, and subsequent hydrolysis of the triphosphate. The protein is S-adenosylmethionine synthase (SAMS) of Solanum palustre (Non-tuber-performing potato).